Here is a 783-residue protein sequence, read N- to C-terminus: Galactinol--sucrose galactosyltransferase (783 aa).

This sequence belongs to the glycosyl hydrolases 36 family.

The catalysed reaction is alpha-D-galactosyl-(1-&gt;3)-1D-myo-inositol + sucrose = raffinose + myo-inositol. Its activity is regulated as follows. Inhibited by Ag(2)+, Hg(2+), Zn(2+), p-chloromercuribenzoate (pCMB) and 1-deoxygalactonojirimycin. Its function is as follows. Transglycosidase operating by a ping-pong reaction mechanism. Involved in the synthesis of raffinose, a major soluble carbohydrate in seeds, roots and tubers. Specific for galactinol and p-nitrophenyl-alpha-D-galactoside as galactosyl donors. Able to utilize sucrose, lactose, 4-beta-galactobiose, N-acetyl-D-lactosamine, trehalose and lacto-N-biose as acceptors. May also act as a glycoside hydrolase. The polypeptide is Galactinol--sucrose galactosyltransferase (RFS) (Oryza sativa subsp. japonica (Rice)).